A 118-amino-acid polypeptide reads, in one-letter code: UPF0102 protein DICTH_1420 (118 aa).

This sequence belongs to the UPF0102 family.

The protein is UPF0102 protein DICTH_1420 of Dictyoglomus thermophilum (strain ATCC 35947 / DSM 3960 / H-6-12).